The sequence spans 101 residues: Apolipoprotein C-II (101 aa).

A signal peptide spans Met-1–Gly-22. Residues Thr-66–Met-74 are lipid binding. A lipoprotein lipase cofactor region spans residues Ser-78–Asp-101.

Belongs to the apolipoprotein C2 family. In terms of processing, proapolipoprotein C-II is synthesized as a sialic acid containing glycoprotein which is subsequently desialylated prior to its proteolytic processing. Post-translationally, proapolipoprotein C-II, the major form found in plasma undergoes proteolytic cleavage of its N-terminal hexapeptide to generate apolipoprotein C-II, which occurs as the minor form in plasma.

The protein localises to the secreted. Its function is as follows. Component of chylomicrons, very low-density lipoproteins (VLDL), low-density lipoproteins (LDL), and high-density lipoproteins (HDL) in plasma. Plays an important role in lipoprotein metabolism as an activator of lipoprotein lipase. Both proapolipoprotein C-II and apolipoprotein C-II can activate lipoprotein lipase. This Tapirus terrestris (Lowland tapir) protein is Apolipoprotein C-II (APOC2).